The chain runs to 2542 residues: Highly reducing polyketide synthase (2542 aa).

A Ketosynthase family 3 (KS3) domain is found at 7 to 435 (PEPIAIVGMA…GANAHAILDA (429 aa)). Catalysis depends on for beta-ketoacyl synthase activity residues Cys182, His317, and His357. The Malonyl-CoA:ACP transacylase (MAT) domain maps to 545–872 (FVFTGQGAQW…NLVGSLFLSG (328 aa)). Residues 927 to 1062 (HDLLGSRIPG…TTNETLRINS (136 aa)) form an N-terminal hotdog fold region. Residues 927-1224 (HDLLGSRIPG…FLSLETATKE (298 aa)) form the PKS/mFAS DH domain. Residue His959 is the Proton acceptor; for dehydratase activity of the active site. The segment at 1072 to 1224 (NKDSYVRRWY…FLSLETATKE (153 aa)) is C-terminal hotdog fold. Asp1137 serves as the catalytic Proton donor; for dehydratase activity. The tract at residues 1275–1574 (LTQLAIRSVV…AGADIMLDDY (300 aa)) is methyltransferase (CMet) domain. The disordered stretch occupies residues 1606–1634 (VNGTNGINSTNSVNVTNDTSGINDTNRMN). The Enoyl reductase (ER) domain occupies 1866 to 2186 (GKANSFYFES…QGDSVGSVVL (321 aa)). The region spanning 2209–2389 (ASYLLVGCLG…QAMSMALGMI (181 aa)) is the Ketoreductase (KR) domain.

Pantetheine 4'-phosphate is required as a cofactor.

It functions in the pathway antifungal biosynthesis. Highly reducing polyketide synthase; part of the gene cluster that mediates the biosynthesis of the tetrahydropyranyl antifungal agent lanomycin that acts as an inhibitor of CYP51 and blocks the ergosterol biosynthesis. The biosynthesis probably begins with the formation of an hexaketide, followed by methionine mediated alkylation of C-2 and C-6, and methylation of the reduced C-3 oxygen, pyran forming reductive ring closure, oxygenation of C-4, beta-keto reduction, enoyl reduction and dehydration of the remaining oxygens, and finally, acylation with glycine to complete the biosynthesis. This Pyrenophora dematioidea (Helminthosporium dematioideum) protein is Highly reducing polyketide synthase.